The sequence spans 265 residues: Probable cell division protein kinase ECU08_0230 (265 aa).

The 260-residue stretch at 4–263 folds into the Protein kinase domain; it reads YILGALIGSG…IMEILENEYG (260 aa). ATP is bound by residues 10-18 and Lys-33; that span reads IGSGTYGEV. Asp-121 serves as the catalytic Proton acceptor.

Belongs to the protein kinase superfamily. CMGC Ser/Thr protein kinase family. CDC2/CDKX subfamily.

The protein localises to the nucleus. It carries out the reaction L-seryl-[protein] + ATP = O-phospho-L-seryl-[protein] + ADP + H(+). The enzyme catalyses L-threonyl-[protein] + ATP = O-phospho-L-threonyl-[protein] + ADP + H(+). Its function is as follows. May play a role in the control of the eukaryotic cell cycle. The polypeptide is Probable cell division protein kinase ECU08_0230 (Encephalitozoon cuniculi (strain GB-M1) (Microsporidian parasite)).